A 633-amino-acid polypeptide reads, in one-letter code: Chitin synthase regulatory factor 4 (633 aa).

Positions 121–151 (ATSSQETKRDRPLPNIRNSAPSATRSHSTPC) are disordered. Polar residues predominate over residues 136–149 (IRNSAPSATRSHST). A Phosphoserine modification is found at Ser-148. Sel1-like repeat units lie at residues 278 to 314 (AKAM…NLGY), 315 to 346 (TRSL…SEND), 438 to 474 (SSAQ…KRGE), 475 to 511 (TEAD…MAGN), and 512 to 543 (ANAQ…KAGH). The segment at 583–613 (ASETSPPHAPAVSSTPVTSAPPVSQTKVTKV) is disordered. A compositionally biased stretch (low complexity) spans 592 to 613 (PAVSSTPVTSAPPVSQTKVTKV).

Its subcellular location is the cytoplasm. Functionally, involved in septum formation. Required for the proper localization of chs2 at the septum. The protein is Chitin synthase regulatory factor 4 (chr4) of Schizosaccharomyces pombe (strain 972 / ATCC 24843) (Fission yeast).